The chain runs to 620 residues: Methionine--tRNA ligase (620 aa).

The 'HIGH' region signature appears at 11-21 (PYANGPRHIGH). Zn(2+)-binding residues include Cys143, Cys146, Cys156, and Cys159. A 'KMSKS' region motif is present at residues 347–351 (KFSSS). Residue Ser350 coordinates ATP.

Belongs to the class-I aminoacyl-tRNA synthetase family. MetG type 1 subfamily. In terms of assembly, monomer. Zn(2+) serves as cofactor.

Its subcellular location is the cytoplasm. The catalysed reaction is tRNA(Met) + L-methionine + ATP = L-methionyl-tRNA(Met) + AMP + diphosphate. Its function is as follows. Is required not only for elongation of protein synthesis but also for the initiation of all mRNA translation through initiator tRNA(fMet) aminoacylation. This Bifidobacterium adolescentis (strain ATCC 15703 / DSM 20083 / NCTC 11814 / E194a) protein is Methionine--tRNA ligase.